The chain runs to 184 residues: Thymidine kinase (184 aa).

ATP-binding positions include 10–17 (GPMYSGKT), His-53, and 83–86 (DEVQ). The Proton acceptor role is filled by Glu-84. His-115 is a substrate binding site. 2 residues coordinate Zn(2+): Cys-140 and Cys-143. Residues 161–164 (IDVG) and Tyr-169 contribute to the substrate site. Cys-173 and Cys-176 together coordinate Zn(2+).

This sequence belongs to the thymidine kinase family. As to quaternary structure, homotetramer.

It localises to the cytoplasm. The catalysed reaction is thymidine + ATP = dTMP + ADP + H(+). The sequence is that of Thymidine kinase (tdk) from Thermotoga maritima (strain ATCC 43589 / DSM 3109 / JCM 10099 / NBRC 100826 / MSB8).